The chain runs to 337 residues: Anthranilate phosphoribosyltransferase (337 aa).

5-phospho-alpha-D-ribose 1-diphosphate contacts are provided by residues G81, 84–85 (GD), S89, 91–94 (NVST), 109–117 (KHGNRAMSS), and A121. Residue G81 coordinates anthranilate. S93 contributes to the Mg(2+) binding site. N112 is an anthranilate binding site. An anthranilate-binding site is contributed by R167. Positions 226 and 227 each coordinate Mg(2+).

This sequence belongs to the anthranilate phosphoribosyltransferase family. As to quaternary structure, homodimer. Mg(2+) serves as cofactor.

The catalysed reaction is N-(5-phospho-beta-D-ribosyl)anthranilate + diphosphate = 5-phospho-alpha-D-ribose 1-diphosphate + anthranilate. The protein operates within amino-acid biosynthesis; L-tryptophan biosynthesis; L-tryptophan from chorismate: step 2/5. Catalyzes the transfer of the phosphoribosyl group of 5-phosphorylribose-1-pyrophosphate (PRPP) to anthranilate to yield N-(5'-phosphoribosyl)-anthranilate (PRA). The sequence is that of Anthranilate phosphoribosyltransferase from Afipia carboxidovorans (strain ATCC 49405 / DSM 1227 / KCTC 32145 / OM5) (Oligotropha carboxidovorans).